Reading from the N-terminus, the 238-residue chain is Aspartate/glutamate leucyltransferase (238 aa).

It belongs to the R-transferase family. Bpt subfamily.

The protein localises to the cytoplasm. The catalysed reaction is N-terminal L-glutamyl-[protein] + L-leucyl-tRNA(Leu) = N-terminal L-leucyl-L-glutamyl-[protein] + tRNA(Leu) + H(+). It catalyses the reaction N-terminal L-aspartyl-[protein] + L-leucyl-tRNA(Leu) = N-terminal L-leucyl-L-aspartyl-[protein] + tRNA(Leu) + H(+). Its function is as follows. Functions in the N-end rule pathway of protein degradation where it conjugates Leu from its aminoacyl-tRNA to the N-termini of proteins containing an N-terminal aspartate or glutamate. In Aeromonas hydrophila subsp. hydrophila (strain ATCC 7966 / DSM 30187 / BCRC 13018 / CCUG 14551 / JCM 1027 / KCTC 2358 / NCIMB 9240 / NCTC 8049), this protein is Aspartate/glutamate leucyltransferase.